The chain runs to 968 residues: Isoleucine--tRNA ligase (968 aa).

Positions 68–78 (PYANGALHMGH) match the 'HIGH' region motif. L-isoleucyl-5'-AMP is bound at residue Glu-582. Positions 623-627 (KMSKS) match the 'KMSKS' region motif. Lys-626 serves as a coordination point for ATP. Positions 936, 939, 956, and 959 each coordinate Zn(2+).

It belongs to the class-I aminoacyl-tRNA synthetase family. IleS type 1 subfamily. As to quaternary structure, monomer. The cofactor is Zn(2+).

It is found in the cytoplasm. The catalysed reaction is tRNA(Ile) + L-isoleucine + ATP = L-isoleucyl-tRNA(Ile) + AMP + diphosphate. Catalyzes the attachment of isoleucine to tRNA(Ile). As IleRS can inadvertently accommodate and process structurally similar amino acids such as valine, to avoid such errors it has two additional distinct tRNA(Ile)-dependent editing activities. One activity is designated as 'pretransfer' editing and involves the hydrolysis of activated Val-AMP. The other activity is designated 'posttransfer' editing and involves deacylation of mischarged Val-tRNA(Ile). This Prochlorococcus marinus (strain AS9601) protein is Isoleucine--tRNA ligase.